The primary structure comprises 59 residues: Conotoxin Ts-03 (59 aa).

Residues 1-19 (MRCLPVFIILLLLIPSAAS) form the signal peptide. A propeptide spanning residues 20–47 (VAQPKTKDDVALASFYDNAKRTLQRHWA) is cleaved from the precursor.

This sequence belongs to the conotoxin T superfamily. In terms of processing, contains 2 disulfide bonds that can be either 'C1-C3, C2-C4' or 'C1-C4, C2-C3', since these disulfide connectivities have been observed for conotoxins with cysteine framework V (for examples, see AC P0DQQ7 and AC P81755). Expressed by the venom duct.

The protein resides in the secreted. In Conus tessulatus (Tessellate cone), this protein is Conotoxin Ts-03.